The primary structure comprises 285 residues: Methanethiol S-methyltransferase 1 (285 aa).

A run of 5 helical transmembrane segments spans residues 55–75, 88–108, 132–152, 162–182, and 224–244; these read AYLVFFVTILYAIGFVMGLVV, AEAVIINLLLMALFAVQHSVM, LFASLSLLLLFWQWRPLPTVI, VTLVTVSFAGWVLVFTSTFII, and FIVAFWAAPVMTAGHLLFAAV.

This sequence belongs to the nurim family.

The protein resides in the membrane. The enzyme catalyses methanethiol + S-adenosyl-L-methionine = dimethyl sulfide + S-adenosyl-L-homocysteine + H(+). Functionally, catalyzes the methylation of methanethiol (MeSH) to yield dimethylsulphide (DMS). The polypeptide is Methanethiol S-methyltransferase 1 (Bradyrhizobium diazoefficiens (strain JCM 10833 / BCRC 13528 / IAM 13628 / NBRC 14792 / USDA 110)).